A 598-amino-acid polypeptide reads, in one-letter code: Pantothenate kinase 1 (598 aa).

A disordered region spans residues 32 to 161; that stretch reads ARPGDQGKAG…SPGAPVGTSA (130 aa). Residues 38–49 are compositionally biased toward gly residues; sequence GKAGGGSPGWGC. The residue at position 215 (Ser215) is a Phosphoserine. A Nucleolar localization signal motif is present at residues 218–235; it reads KKCRLRRRMDSGRKNRPP. Glu363 serves as the catalytic Proton acceptor. Acetyl-CoA-binding residues include Ser417, Ser420, and Arg432.

The protein belongs to the type II pantothenate kinase family. Homodimer. As to expression, expressed at high levels in brain, heart, kidney, liver, skeletal muscle and testis. Detected at much lower levels in kidney, liver, brain and testis and not detected in heart or skeletal muscle.

Its subcellular location is the cytoplasm. The protein localises to the nucleus. It localises to the nucleolus. The protein resides in the cytosol. It is found in the cytoplasmic vesicle. Its subcellular location is the clathrin-coated vesicle. The protein localises to the recycling endosome. It carries out the reaction (R)-pantothenate + ATP = (R)-4'-phosphopantothenate + ADP + H(+). The protein operates within cofactor biosynthesis; coenzyme A biosynthesis; CoA from (R)-pantothenate: step 1/5. With respect to regulation, regulated by feedback inhibition by CoA and its thioesters. Its function is as follows. Catalyzes the phosphorylation of pantothenate to generate 4'-phosphopantothenate in the first and rate-determining step of coenzyme A (CoA) synthesis. The sequence is that of Pantothenate kinase 1 (PANK1) from Homo sapiens (Human).